Reading from the N-terminus, the 119-residue chain is Beta-2-microglobulin (119 aa).

An N-terminal signal peptide occupies residues 1–20 (MARFVAVALLVLLSLSGLET). Residues 25-114 (PKIQVYSRHP…VTFSTPKTVK (90 aa)) form the Ig-like C1-type domain. The cysteines at positions 45 and 100 are disulfide-linked.

This sequence belongs to the beta-2-microglobulin family. As to quaternary structure, heterodimer of an alpha chain and a beta chain. Beta-2-microglobulin is the beta-chain of major histocompatibility complex class I molecules.

The protein localises to the secreted. Component of the class I major histocompatibility complex (MHC). Involved in the presentation of peptide antigens to the immune system. This Callicebus personatus personatus (Masked titi) protein is Beta-2-microglobulin (B2M).